Consider the following 400-residue polypeptide: Elongation factor Tu (400 aa).

The 200-residue stretch at 10–209 folds into the tr-type G domain; it reads KPHINIGTIG…AVDDYIPTPE (200 aa). The interval 19–26 is G1; sequence GHVDHGKT. GTP is bound at residue 19-26; it reads GHVDHGKT. A Mg(2+)-binding site is contributed by T26. The G2 stretch occupies residues 60 to 64; sequence GITIS. Residues 81–84 form a G3 region; sequence DCPG. GTP is bound by residues 81–85 and 136–139; these read DCPGH and NKVD. Residues 136–139 are G4; that stretch reads NKVD. Positions 174–176 are G5; the sequence is SAK.

The protein belongs to the TRAFAC class translation factor GTPase superfamily. Classic translation factor GTPase family. EF-Tu/EF-1A subfamily. In terms of assembly, monomer.

Its subcellular location is the cytoplasm. It catalyses the reaction GTP + H2O = GDP + phosphate + H(+). Functionally, GTP hydrolase that promotes the GTP-dependent binding of aminoacyl-tRNA to the A-site of ribosomes during protein biosynthesis. The polypeptide is Elongation factor Tu (Herpetosiphon aurantiacus (Herpetosiphon giganteus)).